A 354-amino-acid chain; its full sequence is UDP-N-acetylglucosamine--N-acetylmuramyl-(pentapeptide) pyrophosphoryl-undecaprenol N-acetylglucosamine transferase (354 aa).

Residues 15–17 (TGG), Asn127, Arg163, Ser191, Ile244, 263–268 (ALTVSE), and Gln288 each bind UDP-N-acetyl-alpha-D-glucosamine.

The protein belongs to the glycosyltransferase 28 family. MurG subfamily.

Its subcellular location is the cell inner membrane. The enzyme catalyses di-trans,octa-cis-undecaprenyl diphospho-N-acetyl-alpha-D-muramoyl-L-alanyl-D-glutamyl-meso-2,6-diaminopimeloyl-D-alanyl-D-alanine + UDP-N-acetyl-alpha-D-glucosamine = di-trans,octa-cis-undecaprenyl diphospho-[N-acetyl-alpha-D-glucosaminyl-(1-&gt;4)]-N-acetyl-alpha-D-muramoyl-L-alanyl-D-glutamyl-meso-2,6-diaminopimeloyl-D-alanyl-D-alanine + UDP + H(+). It participates in cell wall biogenesis; peptidoglycan biosynthesis. Its function is as follows. Cell wall formation. Catalyzes the transfer of a GlcNAc subunit on undecaprenyl-pyrophosphoryl-MurNAc-pentapeptide (lipid intermediate I) to form undecaprenyl-pyrophosphoryl-MurNAc-(pentapeptide)GlcNAc (lipid intermediate II). The sequence is that of UDP-N-acetylglucosamine--N-acetylmuramyl-(pentapeptide) pyrophosphoryl-undecaprenol N-acetylglucosamine transferase from Aliivibrio fischeri (strain ATCC 700601 / ES114) (Vibrio fischeri).